We begin with the raw amino-acid sequence, 193 residues long: NADH-quinone oxidoreductase subunit B (193 aa).

[4Fe-4S] cluster is bound by residues Cys-72, Cys-73, Cys-137, and Cys-167.

This sequence belongs to the complex I 20 kDa subunit family. In terms of assembly, NDH-1 is composed of 14 different subunits. Subunits NuoB, C, D, E, F, and G constitute the peripheral sector of the complex. It depends on [4Fe-4S] cluster as a cofactor.

Its subcellular location is the cell inner membrane. It carries out the reaction a quinone + NADH + 5 H(+)(in) = a quinol + NAD(+) + 4 H(+)(out). In terms of biological role, NDH-1 shuttles electrons from NADH, via FMN and iron-sulfur (Fe-S) centers, to quinones in the respiratory chain. The immediate electron acceptor for the enzyme in this species is believed to be ubiquinone. Couples the redox reaction to proton translocation (for every two electrons transferred, four hydrogen ions are translocated across the cytoplasmic membrane), and thus conserves the redox energy in a proton gradient. In Phenylobacterium zucineum (strain HLK1), this protein is NADH-quinone oxidoreductase subunit B.